Here is a 258-residue protein sequence, read N- to C-terminus: Terpene cyclase macJ (258 aa).

7 consecutive transmembrane segments (helical) span residues valine 29 to alanine 49, tyrosine 58 to valine 78, leucine 83 to isoleucine 103, isoleucine 124 to isoleucine 144, valine 151 to leucine 171, serine 181 to tryptophan 201, and phenylalanine 220 to glutamine 240.

The protein belongs to the paxB family.

The protein resides in the membrane. Its pathway is secondary metabolite biosynthesis; terpenoid biosynthesis. In terms of biological role, terpene cyclase; part of the gene cluster that mediates the biosynthesis of macrophorins, isoprenoid epoxycyclohexenones containing cyclized drimane moieties. The first step of the pathway is the synthesis of 6-methylsalicylic acid (6-MSA) by the polyketide synthase macA. 6-MSA is then converted to m-cresol by the decarboxylase macB. The cytochrome P450 monooxygenase macC then catalyzes the oxidation of m-cresol to toluquinol. Epoxidation of toluquinol is then performed by the short chain dehydrogenase macD, with the help of macE, and a further prenylation by macG leads to 7-deacetoxyyanuthone A. The next step is the hydroxylation of C-22 of 7-deacetoxyyanuthone A by the cytochrome P450 monooxygenase macH to yield 22-deacetylyanuthone A. O-Mevalon transferase macI then attaches mevalon to the hydroxyl group of 22-deacetylyanuthone A to produce yanuthone E. The terpene cyclase macJ catalyzes the cyclization of 22-deacetylyanuthone A to macrophorin A. MacJ is also able to catalyze cyclization of yanuthone E and 7-deacetoxyyanuthone A to their corresponding macrophorins. The macJ products can be further modified by macH and macJ, as well as by the FAD-dependent monooxygenase macF, to produce additional macrophorins, including 4'-oxomacrophorin A, 4'-oxomacrophorin D and 4'-oxomacrophorin E. This is Terpene cyclase macJ from Penicillium terrestre.